Reading from the N-terminus, the 156-residue chain is Radiation-inducible immediate-early gene IEX-1 (156 aa).

Residues 1–62 (MCHSRSCHPT…SASRGHRKRS (62 aa)) are disordered. At 1–82 (MCHSRSCHPT…RQLPVEEPNP (82 aa)) the chain is on the cytoplasmic side. Thr-18 carries the phosphothreonine; by MAPK1 modification. Phosphoserine is present on Ser-31. Low complexity predominate over residues 44–55 (PAAAPAGRPSAS). The helical; Signal-anchor for type II membrane protein transmembrane segment at 83–99 (AKRLLFLLLTIVFCQIL) threads the bilayer. The Extracellular segment spans residues 100 to 156 (MAEEGVPAPLPPEDAPNAASLAPTPVSAVLEPFNLTSEPSDYALDLSTFLQQHPAAF). Thr-123 carries the phosphothreonine; by MAPK1 modification. Ser-126 is subject to Phosphoserine; by MAPK1. Asn-133 carries N-linked (GlcNAc...) asparagine glycosylation.

This sequence belongs to the IER3 family. In terms of assembly, interacts with the PPP2R5C-PP2A holoenzyme and ERK kinases; regulates ERK dephosphorylation. Post-translationally, phosphorylated at Thr-18, Thr-123 and Ser-126 by MAPK1/ERK2 and probably MAPK3/ERK1. Upon phosphorylation by MAPK1/ERK2 and MAPK3/ERK1, acquires the ability to inhibit cell death induced by various stimuli. Glycosylated.

The protein localises to the membrane. Functionally, may play a role in the ERK signaling pathway by inhibiting the dephosphorylation of ERK by phosphatase PP2A-PPP2R5C holoenzyme. Also acts as an ERK downstream effector mediating survival. As a member of the NUPR1/RELB/IER3 survival pathway, may provide pancreatic ductal adenocarcinoma with remarkable resistance to cell stress, such as starvation or gemcitabine treatment. The chain is Radiation-inducible immediate-early gene IEX-1 (IER3) from Homo sapiens (Human).